Reading from the N-terminus, the 169-residue chain is Flagellar biosynthetic protein FliU (169 aa).

It belongs to the FliB family.

In terms of biological role, required for the secretion of flagellin and expression of motility. This is Flagellar biosynthetic protein FliU (fliU) from Salmonella muenchen.